Reading from the N-terminus, the 106-residue chain is Immunity protein CdiI (106 aa).

As to quaternary structure, forms a contact-dependent growth inhibition complex of CdiA-CT-NC101, CdiI-NC101 and EF-Tu; the complex is a dimer of heterotrimers.

Its function is as follows. Immunity protein component of a toxin-immunity protein module, which functions as a cellular contact-dependent growth inhibition (CDI) system. CDI modules allow bacteria to communicate with and inhibit the growth of closely related neighboring bacteria in a contact-dependent fashion. Neutralizes the toxic activity of cognate toxin CdiA-NC101 (the C-terminal 154 residue CT fragment). Does not inhibit toxic activity of CdiA from other toxin-immunity modules or strains of E.coli. Mediates dimerization of the ternary CdiA-CT-NC101, CdiI-NC101 and EF-Tu complex; both CdiI molecules contact both EF-Tu molecules. In Escherichia coli (strain NC101), this protein is Immunity protein CdiI.